A 418-amino-acid chain; its full sequence is UPF0261 protein BMEII0128 (418 aa).

This sequence belongs to the UPF0261 family.

The protein is UPF0261 protein BMEII0128 of Brucella melitensis biotype 1 (strain ATCC 23456 / CCUG 17765 / NCTC 10094 / 16M).